The primary structure comprises 83 residues: Protein kreg-1 (83 aa).

Residues 62–83 (GHHHHHHGHHFGHHHHHHHGHH) form a disordered region.

Weakly expressed in the intestine, but expression is up-regulated in response to Cu(2+).

Its function is as follows. Plays a role in the stress response to heavy metals such as copper, probably in a fos-1/kgb-1-dependent manner. This Caenorhabditis elegans protein is Protein kreg-1.